A 527-amino-acid polypeptide reads, in one-letter code: Pentatricopeptide repeat-containing protein At4g25270, chloroplastic (527 aa).

Residues 1 to 47 (MVSIVVHKPSFSYPSVSSSSMKKKPRHHQQLKQHRQNQYNNNGFTSL) constitute a chloroplast transit peptide. The interval 12 to 44 (SYPSVSSSSMKKKPRHHQQLKQHRQNQYNNNGF) is disordered. Residues 21–35 (MKKKPRHHQQLKQHR) are compositionally biased toward basic residues. PPR repeat units follow at residues 126–156 (NLGISSKLVRLYASCGYAEVAHEVFDRMSKR), 159–193 (SPFAWNSLISGYAELGQYEDAMALYFQMAEDGVKP), 194–228 (DRFTFPRVLKACGGIGSVQIGEAIHRDLVKEGFGY), 229–259 (DVYVLNALVVMYAKCGDIVKARNVFDMIPHK), 260–294 (DYVSWNSMLTGYLHHGLLHEALDIFRLMVQNGIEP), 295–326 (DKVAISSVLARVLSFKHGRQLHGWVIRRGMEW), 327–361 (ELSVANALIVLYSKRGQLGQACFIFDQMLERDTVS), 367–389 (SAHSKNSNGLKYFEQMHRANAKP), 390–425 (DGITFVSVLSLCANTGMVEDGERLFSLMSKEYGIDP), and 426–457 (KMEHYACMVNLYGRAGMMEEAYSMIVQEMGLE). The interval 462–527 (VWGALLYACY…QMMVDRGLET (66 aa)) is type E motif; degenerate.

It belongs to the PPR family. PCMP-E subfamily.

It localises to the plastid. Its subcellular location is the chloroplast. In Arabidopsis thaliana (Mouse-ear cress), this protein is Pentatricopeptide repeat-containing protein At4g25270, chloroplastic (PCMP-E53).